We begin with the raw amino-acid sequence, 193 residues long: MEPFRIHKGTAAVLMNDNIDTDQIIPKQYLKRIERTGFGKFLFDEWRYDNERHENPNFPLNAPDRKGASILITGDNFGCGSSREHAPWALADYGFRVIIAGGFADIFYMNCMKNGMLPIVMDKDMRENLTKTDAREQIEVDLENEVITTSTHRFHFTIEKMWKEKLLNGLDEISITMQYEQEIREYERKVAVY.

This sequence belongs to the LeuD family. LeuD type 1 subfamily. As to quaternary structure, heterodimer of LeuC and LeuD.

It catalyses the reaction (2R,3S)-3-isopropylmalate = (2S)-2-isopropylmalate. It participates in amino-acid biosynthesis; L-leucine biosynthesis; L-leucine from 3-methyl-2-oxobutanoate: step 2/4. Catalyzes the isomerization between 2-isopropylmalate and 3-isopropylmalate, via the formation of 2-isopropylmaleate. This is 3-isopropylmalate dehydratase small subunit from Bacillus cereus (strain ZK / E33L).